Reading from the N-terminus, the 301-residue chain is N-acetylmuramic acid 6-phosphate etherase (301 aa).

The region spanning 57–220 (TYEKMLFGGR…STSLMIKKGK (164 aa)) is the SIS domain. The active-site Proton donor is the E85. The active site involves E116.

It belongs to the GCKR-like family. MurNAc-6-P etherase subfamily. In terms of assembly, homodimer.

The catalysed reaction is N-acetyl-D-muramate 6-phosphate + H2O = N-acetyl-D-glucosamine 6-phosphate + (R)-lactate. It participates in amino-sugar metabolism; N-acetylmuramate degradation. In terms of biological role, specifically catalyzes the cleavage of the D-lactyl ether substituent of MurNAc 6-phosphate, producing GlcNAc 6-phosphate and D-lactate. This chain is N-acetylmuramic acid 6-phosphate etherase, found in Clostridium botulinum (strain Eklund 17B / Type B).